Here is an 84-residue protein sequence, read N- to C-terminus: Cysteine-rich protamine (84 aa).

Cystine bridges form between cysteine 16–cysteine 24 and cysteine 64–cysteine 80.

In terms of assembly, cross-linked by interchain disulfide bonds around the DNA-helix. Testis.

It localises to the nucleus. It is found in the chromosome. In terms of biological role, protamines substitute for histones in the chromatin of sperm during the haploid phase of spermatogenesis. They compact sperm DNA into a highly condensed, stable and inactive complex. This protamine condenses spermiogenic chromatin in a pattern which comprises fibers with a progressively larger diameter and lamellae that finally undergo definitive coalescence. This chain is Cysteine-rich protamine, found in Eledone cirrhosa (Curled octopus).